Here is a 281-residue protein sequence, read N- to C-terminus: Large ribosomal subunit protein uL2 (281 aa).

Basic and acidic residues predominate over residues 27–38; sequence DSPEKSLTEPLK. Disordered regions lie at residues 27 to 59 and 225 to 281; these read DSPEKSLTEPLKRSGGRNVHGHITRRHQGGGHK and AMNP…ARSQ. A compositionally biased stretch (basic residues) spans 45 to 59; the sequence is VHGHITRRHQGGGHK.

This sequence belongs to the universal ribosomal protein uL2 family. Part of the 50S ribosomal subunit. Forms a bridge to the 30S subunit in the 70S ribosome.

Functionally, one of the primary rRNA binding proteins. Required for association of the 30S and 50S subunits to form the 70S ribosome, for tRNA binding and peptide bond formation. It has been suggested to have peptidyltransferase activity; this is somewhat controversial. Makes several contacts with the 16S rRNA in the 70S ribosome. The chain is Large ribosomal subunit protein uL2 from Myxococcus xanthus (strain DK1622).